The primary structure comprises 279 residues: Phycobilisome rod-core linker polypeptide CpcG1 (279 aa).

The region spanning threonine 11–phenylalanine 189 is the PBS-linker domain.

This sequence belongs to the phycobilisome linker protein family. The phycobilisome is a hemidiscoidal structure that is composed of two distinct substructures: a core complex and a number of rods radiating from the core.

The protein localises to the cellular thylakoid membrane. Its function is as follows. Rod-core linker protein required for attachment of phycocyanin to allophycocyanin in cores of phycobilisomes. Linker polypeptides determine the state of aggregation and the location of the disk-shaped phycobiliprotein units within the phycobilisome and modulate their spectroscopic properties in order to mediate a directed and optimal energy transfer. In Mastigocladus laminosus (Fischerella sp.), this protein is Phycobilisome rod-core linker polypeptide CpcG1 (cpcG1).